A 349-amino-acid polypeptide reads, in one-letter code: MSDSQREQRKNEHVEIAMSQKDALVSDFDKVRFVHHSIPSIDVSQVDMTSHTTKFDLAYPIYINAMTGGSDWTKQINEKLAIVARETGIAMAVGSTHAALRNPNMIETFSIVRKTNPKGTIFSNVGADVPVDKALQAVELLDAQALQIHVNSPQELVMPEGNREFASWMSNIESIVKRVDVPVIIKEVGFGMSKETLQALYDIGVNYVDVSGRGGTNFVDIENERRSNKDMNYLSQWGQSTVESLLESTEFQDRLNIFASGGLRTPLDAVKCLALGAKAIGMSRPFLNQVEQSGITNTVDYVESFIQHMKKIMTMLDAPNIERLRQADIVMSPELISWINQRGLHLNRK.

Position 9-10 (9-10) interacts with substrate; the sequence is RK. FMN is bound by residues 65–67, Ser-95, and Asn-124; that span reads AMT. 95 to 97 provides a ligand contact to substrate; it reads STH. Gln-154 contributes to the substrate binding site. Residue Glu-155 coordinates Mg(2+). FMN-binding positions include Lys-186, Ser-211, Thr-216, 262–264, and 283–284; these read GLR and SR.

Belongs to the IPP isomerase type 2 family. Homooctamer. Dimer of tetramers. The cofactor is FMN. Requires NADPH as cofactor. Mg(2+) is required as a cofactor.

It localises to the cytoplasm. It catalyses the reaction isopentenyl diphosphate = dimethylallyl diphosphate. Functionally, involved in the biosynthesis of isoprenoids. Catalyzes the 1,3-allylic rearrangement of the homoallylic substrate isopentenyl (IPP) to its allylic isomer, dimethylallyl diphosphate (DMAPP). This chain is Isopentenyl-diphosphate delta-isomerase, found in Staphylococcus epidermidis (strain ATCC 35984 / DSM 28319 / BCRC 17069 / CCUG 31568 / BM 3577 / RP62A).